The following is a 454-amino-acid chain: Aspartate aminotransferase P2, mitochondrial (454 aa).

The N-terminal 49 residues, serine 1–valine 49, are a transit peptide targeting the mitochondrion. Residues glycine 86, tryptophan 182, and asparagine 235 each coordinate L-aspartate. Lysine 299 is modified (N6-(pyridoxal phosphate)lysine). L-aspartate is bound at residue arginine 428.

It belongs to the class-I pyridoxal-phosphate-dependent aminotransferase family. As to quaternary structure, homodimer. The cofactor is pyridoxal 5'-phosphate.

The protein resides in the mitochondrion matrix. The catalysed reaction is L-aspartate + 2-oxoglutarate = oxaloacetate + L-glutamate. Important for the metabolism of amino acids and Krebs-cycle related organic acids. In plants, it is involved in nitrogen metabolism and in aspects of carbon and energy metabolism. The chain is Aspartate aminotransferase P2, mitochondrial from Lupinus angustifolius (Narrow-leaved blue lupine).